The sequence spans 113 residues: UPF0251 protein Teth514_1147 (113 aa).

This sequence belongs to the UPF0251 family.

This is UPF0251 protein Teth514_1147 from Thermoanaerobacter sp. (strain X514).